A 689-amino-acid chain; its full sequence is Glycine--tRNA ligase beta subunit (689 aa).

It belongs to the class-II aminoacyl-tRNA synthetase family. Tetramer of two alpha and two beta subunits.

Its subcellular location is the cytoplasm. The enzyme catalyses tRNA(Gly) + glycine + ATP = glycyl-tRNA(Gly) + AMP + diphosphate. The chain is Glycine--tRNA ligase beta subunit from Shewanella putrefaciens (strain CN-32 / ATCC BAA-453).